The following is a 500-amino-acid chain: MTIFDNYEVWFVIGSQHLYGAETLRQVTQHAEHVVNALNTEAKLPCKLVLKPLGTSPDEITAICRDANYDDRCAGLVVWLHTFSPAKMWINGLSILNKPLLQFHTQFNAALPWDSIDMDFMNLNQTAHGGREFGFIGARMRQQHAVVTGHWQDKEAHTRIGAWMRQAVSKQDTRQLKVCRFGDNMREVAVTDGDKVAAQIKFGFSVNTWAVGDLVQVVNSIGDGDISALIDEYESSYTLTPATQIHGDKRQNVREAARIELGMKRFLEQGGFHAFTTTFEDLHGLKQLPGLAVQRLMQQGYGFAGEGDWKTAALLRIMKVMSTGLQGGTSFMEDYTYHFEKGNDLVLGSHMLEVCPSIAVEEKPILDVQHLGIGGKEDPARLIFNTQTGPAIVASLIDLGDRYRLLVNCIDTVKTPHSLPKLPVANALWKAQPDLPTASEAWILAGGAHHTVFSHALDLNDMRQFAEIHDIEIAVIDNDTRLPAFKDALRWNEVYYGLKR.

Glu-306, Glu-333, His-350, and His-450 together coordinate Mn(2+).

The protein belongs to the arabinose isomerase family. In terms of assembly, homohexamer. Mn(2+) serves as cofactor.

It carries out the reaction beta-L-arabinopyranose = L-ribulose. It participates in carbohydrate degradation; L-arabinose degradation via L-ribulose; D-xylulose 5-phosphate from L-arabinose (bacterial route): step 1/3. Catalyzes the conversion of L-arabinose to L-ribulose. The polypeptide is L-arabinose isomerase (Salmonella paratyphi A (strain ATCC 9150 / SARB42)).